A 205-amino-acid chain; its full sequence is Syndecan 4-B (205 aa).

The N-terminal stretch at 1-17 (MNRLLLLLALVLSGVAA) is a signal peptide. At 18–162 (ESIRETETMD…FFQRTEVIVA (145 aa)) the chain is on the extracellular side. Residues 26–113 (MDPTSMLEYE…HDFDETKTGR (88 aa)) form a disordered region. O-linked (Xyl...) (glycosaminoglycan) serine glycosylation is found at Ser37, Ser73, and Ser75. Residues 44 to 94 (VFVDEDDDDDYEDGVDYEIDSESDNDEDYSGSGDDDFDDEDNVEDEDEEET) show a composition bias toward acidic residues. Basic and acidic residues predominate over residues 102–113 (PEHDFDETKTGR). The chain crosses the membrane as a helical span at residues 163–183 (IIAGTLVGLVVAVSFIVFLVI). Topologically, residues 184–205 (RRNQNGDLVKKPIYKKTSTMEV) are cytoplasmic.

It belongs to the syndecan proteoglycan family. Interacts with the Wnt receptor fzd7 and its signal transducer dvl2/dsh. O-glycosylated; contains both chondroitin sulfate and heparan sulfate. Ser-37, Ser-73 and Ser-75 can all be modified by either chondroitin sulfate or heparan sulfate, and the protein exists in forms that contain only chondroitin sulfate, only heparan sulfate and both chondroitin sulfate and heparan sulfate. Expressed in the animal hemisphere from the 4-cell to the blastula stage. During gastrulation, expressed in the involuting dorsal mesoderm and ectoderm. After involution, localized mainly to the anterior neuroectoderm. At later stages, expressed in the brain, branchial arches, pronephros, tailbud, and at low levels in the somites.

The protein localises to the membrane. In terms of biological role, cell surface proteoglycan. Regulates non-canonical Wnt signaling, being necessary and sufficient for fibronectrin-mediated translocation of dvl2/dsh to the plasma membrane. Required for proper convergent extension movements during gastrulation, which shape the neural plate, and for subsequent neural tube closure. This chain is Syndecan 4-B (sdc4-b), found in Xenopus laevis (African clawed frog).